The chain runs to 343 residues: Transmembrane protein 120A (343 aa).

The Cytoplasmic portion of the chain corresponds to 1 to 132 (MHPPPPGPLG…KQAKFAYKDE (132 aa)). A CoA-binding site is contributed by lysine 130. A helical membrane pass occupies residues 133–152 (YEKFKLYLTIILILISFTCR). Residues 153 to 158 (FLLNSR) lie on the Extracellular side of the membrane. The chain crosses the membrane as a helical span at residues 159–177 (VTDAAFNFLLVWYYCTLTI). At 178–190 (RESILINNGSRIK) the chain is on the cytoplasmic side. The CoA site is built by serine 187 and arginine 188. The helical transmembrane segment at 191–209 (GWWVFHHYVSTFLSGVMLT) threads the bilayer. Over 210–218 (WPDGLMYQK) the chain is Extracellular. A helical transmembrane segment spans residues 219-240 (FRNQFLSFSMYQSFVQFLQYYY). Positions 237, 240, 241, and 283 each coordinate CoA. At 241–270 (QSGCLYRLRALGERHTMDLTVEGFQSWMWR) the chain is on the cytoplasmic side. A helical membrane pass occupies residues 271 to 294 (GLTFLLPFLFFGHFWQLFNALTLF). Residues 295–304 (NLARDPECKE) lie on the Extracellular side of the membrane. A helical transmembrane segment spans residues 305-330 (WQVLMCGFPFLLLFLGNFFTTLRVVH). At 331-343 (QKFHNQLHGSKKE) the chain is on the cytoplasmic side. CoA is bound at residue lysine 332.

It belongs to the TMEM120 family. Homodimer. Forms heterooligomer with TMEM120B. Interacts with PKD2; TMEM120A inhibits PKD2 channel activity through the physical association of PKD2 with TMEM120A.

The protein resides in the cell membrane. It is found in the nucleus inner membrane. Its subcellular location is the endoplasmic reticulum. Multifunctional protein involved in mechanosensation, and plays an essential role in lipid metabolism and adipocyte differentiation. May function as an ion channel involved in sensing mechanical stimuli. Mediates the mechanosensitivity of the PKD2-TMEM120A channel complex through direct physical interaction. TMEM120A seems to affect mechanosensation by inhibiting PIEZO2 channels, possibly by altering cellular lipid content. TMEM120A is structurally similar to a lipid-modifying enzyme, ELOVL7, and contains a bound coenzyme A molecule, which suggests it might function as an enzyme in lipid metabolism. Additionnaly, implicated in innate immune response against Zika virus. Acts as a key activator of the antiviral signaling involving STING1. In Bos taurus (Bovine), this protein is Transmembrane protein 120A.